The sequence spans 325 residues: Elongation factor P--(R)-beta-lysine ligase (325 aa).

76–78 (SPE) contributes to the substrate binding site. ATP contacts are provided by residues 100–102 (RNE) and N109. Substrate is bound at residue Y118. Residue 244 to 245 (EL) participates in ATP binding. E251 serves as a coordination point for substrate. ATP is bound at residue G300.

It belongs to the class-II aminoacyl-tRNA synthetase family. EpmA subfamily. In terms of assembly, homodimer.

It catalyses the reaction D-beta-lysine + L-lysyl-[protein] + ATP = N(6)-((3R)-3,6-diaminohexanoyl)-L-lysyl-[protein] + AMP + diphosphate + H(+). Its function is as follows. With EpmB is involved in the beta-lysylation step of the post-translational modification of translation elongation factor P (EF-P) on 'Lys-34'. Catalyzes the ATP-dependent activation of (R)-beta-lysine produced by EpmB, forming a lysyl-adenylate, from which the beta-lysyl moiety is then transferred to the epsilon-amino group of EF-P 'Lys-34'. The protein is Elongation factor P--(R)-beta-lysine ligase of Salmonella gallinarum (strain 287/91 / NCTC 13346).